An 832-amino-acid chain; its full sequence is Golgin subfamily A member 6-like protein 24 (832 aa).

Disordered regions lie at residues 1 to 107 (MWPQ…QEAL), 303 to 333 (QEQE…MRRQ), 351 to 431 (MHEQ…EMWR), 508 to 652 (QEEM…EQEE), and 664 to 832 (QEEM…MQEH). Basic residues predominate over residues 13-27 (LPTHPHLPTHPHLPT). A compositionally biased stretch (basic and acidic residues) spans 37 to 58 (MSKETRQSKLAEAKEQLTDHHP). Composition is skewed to polar residues over residues 59–69 (QTNPSVGTAAS) and 77–89 (NNGT…TSGG). The span at 92–107 (SPEDEQKASHQHQEAL) shows a compositional bias: basic and acidic residues. The stretch at 163–828 (LEQALSAVAT…EVRLRQQEEK (666 aa)) forms a coiled coil. 2 stretches are compositionally biased toward basic and acidic residues: residues 664-684 (QEEM…KMWE) and 692-832 (QEEK…MQEH).

The protein belongs to the GOLGA6 family.

The chain is Golgin subfamily A member 6-like protein 24 from Homo sapiens (Human).